We begin with the raw amino-acid sequence, 92 residues long: Small ribosomal subunit protein uS19c (92 aa).

Belongs to the universal ribosomal protein uS19 family.

Its subcellular location is the plastid. The protein resides in the chloroplast. Functionally, protein S19 forms a complex with S13 that binds strongly to the 16S ribosomal RNA. The sequence is that of Small ribosomal subunit protein uS19c from Lobularia maritima (Sweet alyssum).